The primary structure comprises 248 residues: UPF0736 protein BcerKBAB4_1085 (248 aa).

The protein belongs to the UPF0736 family.

This Bacillus mycoides (strain KBAB4) (Bacillus weihenstephanensis) protein is UPF0736 protein BcerKBAB4_1085.